The chain runs to 229 residues: Uracil-DNA glycosylase (229 aa).

Asp65 functions as the Proton acceptor in the catalytic mechanism.

Belongs to the uracil-DNA glycosylase (UDG) superfamily. UNG family.

The protein localises to the cytoplasm. It catalyses the reaction Hydrolyzes single-stranded DNA or mismatched double-stranded DNA and polynucleotides, releasing free uracil.. Excises uracil residues from the DNA which can arise as a result of misincorporation of dUMP residues by DNA polymerase or due to deamination of cytosine. The polypeptide is Uracil-DNA glycosylase (Limosilactobacillus reuteri (strain DSM 20016) (Lactobacillus reuteri)).